The sequence spans 634 residues: Transmembrane and coiled-coil domain-containing protein 4 (634 aa).

Residues 150-190 (EELDVLEEMFLESLKEIKEEESEMAEASRKKKENRRKWKRY) adopt a coiled-coil conformation. 3 consecutive transmembrane segments (helical) span residues 203–223 (VIGV…ATII), 231–251 (LGSA…GAGL), and 346–366 (LSGI…ANVI). The interval 542-612 (EPRQAAAAAS…ERPPICSHGM (71 aa)) is disordered. The span at 552–583 (SGETPHQVGQTQGPISGDTSKLAMSTDPSQAQ) shows a compositional bias: polar residues.

The protein belongs to the TMCO4 family.

It is found in the membrane. The protein is Transmembrane and coiled-coil domain-containing protein 4 (TMCO4) of Homo sapiens (Human).